The chain runs to 257 residues: Type III pantothenate kinase (257 aa).

Asp-7–Val-14 is a binding site for ATP. Gly-106–Arg-109 provides a ligand contact to substrate. Catalysis depends on Asp-108, which acts as the Proton acceptor. Asp-128 lines the K(+) pocket. Thr-132 contacts ATP. Thr-184 is a substrate binding site.

The protein belongs to the type III pantothenate kinase family. Homodimer. Requires NH4(+) as cofactor. K(+) serves as cofactor.

It is found in the cytoplasm. The enzyme catalyses (R)-pantothenate + ATP = (R)-4'-phosphopantothenate + ADP + H(+). The protein operates within cofactor biosynthesis; coenzyme A biosynthesis; CoA from (R)-pantothenate: step 1/5. In terms of biological role, catalyzes the phosphorylation of pantothenate (Pan), the first step in CoA biosynthesis. The sequence is that of Type III pantothenate kinase from Nocardioides sp. (strain ATCC BAA-499 / JS614).